A 457-amino-acid chain; its full sequence is Forkhead box protein N3 (457 aa).

The interval 1-24 (MGPVMPASKKAESSGISVSSGLSQ) is disordered. The segment covering 13–23 (SSGISVSSGLS) has biased composition (low complexity). Residues S83, S85, and S97 each carry the phosphoserine modification. The disordered stretch occupies residues 86–109 (PVQDLDDDTPPSPAHSDMPYDARQ). Positions 114–210 (KPPYSFSCLI…QALKKTPYHP (97 aa)) form a DNA-binding region, fork-head. Residues 285–422 (RTESEPPCGS…PESDDEEMKE (138 aa)) form a disordered region. 2 stretches are compositionally biased toward low complexity: residues 308–331 (SSAKSSTARSTSPTSDSISSSSSS) and 342–353 (GSQEGSEGSFQS). Basic and acidic residues predominate over residues 354-376 (HESHSEPEEEDRKPSPKEGKDAL). Basic residues predominate over residues 384 to 396 (QHKKRQHFAKARK). S415 carries the phosphoserine modification.

As to quaternary structure, interacts through its C-terminus with the C-terminus of SNW1/SKIP.

The protein localises to the nucleus. Functionally, acts as a transcriptional repressor. May be involved in DNA damage-inducible cell cycle arrests (checkpoints). This Mus musculus (Mouse) protein is Forkhead box protein N3 (Foxn3).